The following is a 133-amino-acid chain: Ribonuclease P protein component (133 aa).

This sequence belongs to the RnpA family. Consists of a catalytic RNA component (M1 or rnpB) and a protein subunit.

The catalysed reaction is Endonucleolytic cleavage of RNA, removing 5'-extranucleotides from tRNA precursor.. Its function is as follows. RNaseP catalyzes the removal of the 5'-leader sequence from pre-tRNA to produce the mature 5'-terminus. It can also cleave other RNA substrates such as 4.5S RNA. The protein component plays an auxiliary but essential role in vivo by binding to the 5'-leader sequence and broadening the substrate specificity of the ribozyme. This is Ribonuclease P protein component from Pseudomonas putida (strain ATCC 47054 / DSM 6125 / CFBP 8728 / NCIMB 11950 / KT2440).